The following is a 185-amino-acid chain: Ribosome-recycling factor (185 aa).

Belongs to the RRF family.

The protein localises to the cytoplasm. Responsible for the release of ribosomes from messenger RNA at the termination of protein biosynthesis. May increase the efficiency of translation by recycling ribosomes from one round of translation to another. The protein is Ribosome-recycling factor of Streptococcus pneumoniae (strain 70585).